A 583-amino-acid chain; its full sequence is Malonate--CoA ligase ACSF3, mitochondrial (583 aa).

Residues 1–27 (MPPHLALPFRRLFWSLASSQLIPRRHR) constitute a mitochondrion transit peptide. ATP is bound by residues 202 to 210 (TSGTTGRPK), Asp-455, Arg-469, and Lys-561.

The protein belongs to the ATP-dependent AMP-binding enzyme family.

It is found in the mitochondrion. The catalysed reaction is tetracosanoate + ATP + CoA = tetracosanoyl-CoA + AMP + diphosphate. It carries out the reaction malonate + ATP + CoA = malonyl-CoA + AMP + diphosphate. Functionally, catalyzes the initial reaction in intramitochondrial fatty acid synthesis, by activating malonate and methylmalonate, but not acetate, into their respective CoA thioester. May have some preference toward very-long-chain substrates. The polypeptide is Malonate--CoA ligase ACSF3, mitochondrial (Mus musculus (Mouse)).